A 229-amino-acid polypeptide reads, in one-letter code: Non-structural protein P8 (229 aa).

The interval 14 to 26 is CCM-I; it reads MKHNQDRVEELSL. Residues 94 to 116 form a CCM-III region; the sequence is IKRHVNEQILPKLKSDLSELKKK. Helical transmembrane passes span 119–139 and 162–182; these read IIHT…VCTL and SLNP…MVCA. The tract at residues 185-198 is CCM-II; that stretch reads ERALNQQIDMIKKE.

The protein belongs to the orbivirus NS3 family. In terms of assembly, forms homooligomers via coiled-coil motif. Interacts with host OPTN; this interaction inhibits innate immune response.

It localises to the host cell membrane. The protein resides in the host Golgi apparatus. Functionally, plays a role in the inhibition of host innate immune response. Interacts with host OPTN and thus inhibits the recruitment of TBK1 to the host Golgi apparatus. In turn, downstream partner IRF3 cannot be activated and IFN-beta production is impaired. Its function is as follows. Facilitates viral particle release either by increasing plasma membrane permeability through a viroporin-like activity or by viral budding. The protein is Non-structural protein P8 (Segment-10) of Bluetongue virus 10 (isolate USA) (BTV 10).